The primary structure comprises 214 residues: Thiamine-phosphate synthase (214 aa).

Residues 37 to 41 and asparagine 73 each bind 4-amino-2-methyl-5-(diphosphooxymethyl)pyrimidine; that span reads QYREK. Aspartate 74 and aspartate 93 together coordinate Mg(2+). A 4-amino-2-methyl-5-(diphosphooxymethyl)pyrimidine-binding site is contributed by serine 112. A 2-[(2R,5Z)-2-carboxy-4-methylthiazol-5(2H)-ylidene]ethyl phosphate-binding site is contributed by 139–141; the sequence is TIS. Lysine 142 lines the 4-amino-2-methyl-5-(diphosphooxymethyl)pyrimidine pocket. Residues glycine 171 and 191–192 contribute to the 2-[(2R,5Z)-2-carboxy-4-methylthiazol-5(2H)-ylidene]ethyl phosphate site; that span reads IS.

The protein belongs to the thiamine-phosphate synthase family. It depends on Mg(2+) as a cofactor.

It carries out the reaction 2-[(2R,5Z)-2-carboxy-4-methylthiazol-5(2H)-ylidene]ethyl phosphate + 4-amino-2-methyl-5-(diphosphooxymethyl)pyrimidine + 2 H(+) = thiamine phosphate + CO2 + diphosphate. The enzyme catalyses 2-(2-carboxy-4-methylthiazol-5-yl)ethyl phosphate + 4-amino-2-methyl-5-(diphosphooxymethyl)pyrimidine + 2 H(+) = thiamine phosphate + CO2 + diphosphate. It catalyses the reaction 4-methyl-5-(2-phosphooxyethyl)-thiazole + 4-amino-2-methyl-5-(diphosphooxymethyl)pyrimidine + H(+) = thiamine phosphate + diphosphate. It participates in cofactor biosynthesis; thiamine diphosphate biosynthesis; thiamine phosphate from 4-amino-2-methyl-5-diphosphomethylpyrimidine and 4-methyl-5-(2-phosphoethyl)-thiazole: step 1/1. Condenses 4-methyl-5-(beta-hydroxyethyl)thiazole monophosphate (THZ-P) and 2-methyl-4-amino-5-hydroxymethyl pyrimidine pyrophosphate (HMP-PP) to form thiamine monophosphate (TMP). The polypeptide is Thiamine-phosphate synthase (Listeria monocytogenes serotype 4b (strain CLIP80459)).